The primary structure comprises 202 residues: Protein-methionine-sulfoxide reductase heme-binding subunit MsrQ (202 aa).

Helical transmembrane passes span 8 to 28, 42 to 62, 75 to 95, 110 to 130, 147 to 167, and 169 to 189; these read LAVFLGALAVPAWWLYQAWIF, LGLGALVLLLLTLAMTPLQKL, LGLWCFTYVLLHLSAYCVFIL, PYIIVGMLGFVCLFLLAITSN, LVYLILGLGLLHMLWVVRADL, and EWTLYAVVGASLMLLRLPSIA.

Belongs to the MsrQ family. In terms of assembly, heterodimer of a catalytic subunit (MsrP) and a heme-binding subunit (MsrQ). FMN is required as a cofactor. Requires heme b as cofactor.

The protein resides in the cell inner membrane. Part of the MsrPQ system that repairs oxidized periplasmic proteins containing methionine sulfoxide residues (Met-O), using respiratory chain electrons. Thus protects these proteins from oxidative-stress damage caused by reactive species of oxygen and chlorine generated by the host defense mechanisms. MsrPQ is essential for the maintenance of envelope integrity under bleach stress, rescuing a wide series of structurally unrelated periplasmic proteins from methionine oxidation. MsrQ provides electrons for reduction to the reductase catalytic subunit MsrP, using the quinone pool of the respiratory chain. In Pseudomonas aeruginosa (strain UCBPP-PA14), this protein is Protein-methionine-sulfoxide reductase heme-binding subunit MsrQ.